The sequence spans 265 residues: Eukaryotic translation initiation factor 3 subunit J (265 aa).

2 stretches are compositionally biased toward acidic residues: residues 1 to 12 (MAPERWDDEEDS) and 26 to 44 (DEEEDEVLDSWDAAEDSEV). Disordered regions lie at residues 1–113 (MAPE…DADL) and 212–265 (TMSN…DDFM). Composition is skewed to basic and acidic residues over residues 45-65 (EREKAAKAAEAKAKADAEAAA) and 73-86 (RIQEHKEERKKKAE). The stretch at 61–95 (AEAAAKKKSKSQRIQEHKEERKKKAEEEDSDSEEE) forms a coiled coil. Residues 87–97 (EEDSDSEEEDD) show a composition bias toward acidic residues. Residues 216–228 (EKMREERAADKGS) show a composition bias toward basic and acidic residues. Residues 251–265 (DYDNGDDGLGDDDFM) show a composition bias toward acidic residues.

This sequence belongs to the eIF-3 subunit J family. As to quaternary structure, component of the eukaryotic translation initiation factor 3 (eIF-3) complex.

It localises to the cytoplasm. Its function is as follows. Component of the eukaryotic translation initiation factor 3 (eIF-3) complex, which is involved in protein synthesis of a specialized repertoire of mRNAs and, together with other initiation factors, stimulates binding of mRNA and methionyl-tRNAi to the 40S ribosome. The eIF-3 complex specifically targets and initiates translation of a subset of mRNAs involved in cell proliferation. This chain is Eukaryotic translation initiation factor 3 subunit J (hcr1), found in Aspergillus oryzae (strain ATCC 42149 / RIB 40) (Yellow koji mold).